Here is a 77-residue protein sequence, read N- to C-terminus: Large ribosomal subunit protein bL28 (77 aa).

It belongs to the bacterial ribosomal protein bL28 family.

This is Large ribosomal subunit protein bL28 from Verminephrobacter eiseniae (strain EF01-2).